The sequence spans 359 residues: Acyl-CoA desaturase (359 aa).

At methionine 1–valine 72 the chain is on the cytoplasmic side. Residues tryptophan 73 to isoleucine 93 form a helical membrane-spanning segment. Asparagine 75 lines the substrate pocket. The Lumenal portion of the chain corresponds to proline 94 to lysine 97. Residues isoleucine 98 to glycine 118 form a helical membrane-spanning segment. Topologically, residues valine 119–tyrosine 217 are cytoplasmic. Residues histidine 120 and histidine 125 each coordinate Fe cation. Residues histidine 120–histidine 125 carry the Histidine box-1 motif. Substrate-binding residues include asparagine 148, arginine 155, and aspartate 156. Fe cation-binding residues include histidine 157, histidine 160, and histidine 161. A Histidine box-2 motif is present at residues histidine 157–histidine 161. The substrate site is built by arginine 188 and lysine 189. At serine 203 the chain carries Phosphoserine. A helical transmembrane segment spans residues tyrosine 218–leucine 237. Topologically, residues tryptophan 238–serine 241 are lumenal. Residues phenylalanine 242–leucine 263 form a helical membrane-spanning segment. Tryptophan 262 is a binding site for substrate. Topologically, residues valine 264–glycine 359 are cytoplasmic. 4 residues coordinate Fe cation: histidine 269, histidine 298, histidine 301, and histidine 302. Positions histidine 298–histidine 302 match the Histidine box-3 motif.

This sequence belongs to the fatty acid desaturase type 1 family. It depends on Fe(2+) as a cofactor.

The protein localises to the endoplasmic reticulum membrane. It carries out the reaction octadecanoyl-CoA + 2 Fe(II)-[cytochrome b5] + O2 + 2 H(+) = (9Z)-octadecenoyl-CoA + 2 Fe(III)-[cytochrome b5] + 2 H2O. Its function is as follows. Stearoyl-CoA desaturase that utilizes O(2) and electrons from reduced cytochrome b5 to introduce the first double bond into saturated fatty acyl-CoA substrates. Catalyzes the insertion of a cis double bond at the delta-9 position into fatty acyl-CoA substrates including palmitoyl-CoA and stearoyl-CoA. Gives rise to a mixture of 16:1 and 18:1 unsaturated fatty acids. Plays an important role in lipid biosynthesis. Plays an important role in regulating the expression of genes that are involved in lipogenesis and in regulating mitochondrial fatty acid oxidation. Plays an important role in body energy homeostasis. Contributes to the biosynthesis of membrane phospholipids, cholesterol esters and triglycerides. The polypeptide is Acyl-CoA desaturase (SCD) (Ovis aries (Sheep)).